We begin with the raw amino-acid sequence, 363 residues long: 24-methylenesterol C-methyltransferase 2 (363 aa).

Residues 6-26 (MAWTAAGVGMALVYWFVWVMG) traverse the membrane as a helical segment.

Belongs to the class I-like SAM-binding methyltransferase superfamily. Erg6/SMT family.

The protein localises to the membrane. The catalysed reaction is 24-methylidenelophenol + S-adenosyl-L-methionine = (Z)-24-ethylidenelophenol + S-adenosyl-L-homocysteine + H(+). It participates in steroid biosynthesis; sterol biosynthesis. Catalyzes the methyl transfer from S-adenosyl-methionine to the methylene group of 24-methylene lophenol to form 24-ethylidene lophenol. The protein is 24-methylenesterol C-methyltransferase 2 (Smt2-1) of Oryza sativa subsp. japonica (Rice).